The following is a 300-amino-acid chain: B1 kinase (300 aa).

In terms of domain architecture, Protein kinase spans 16–282; sequence WVVGPLIGKG…ITMVNSLTYF (267 aa). ATP contacts are provided by residues 22–30 and Lys45; that span reads IGKGGFGSI. Catalysis depends on Asp147, which acts as the Proton acceptor.

It belongs to the protein kinase superfamily. Ser/Thr protein kinase family. Poxviruses subfamily. Interacts with host JIP1; this interaction increases the amount of MAPK bound to JIP1 and subsequently increases the activity of transcription factors, such as JUN, that respond to these complexes. Interacts with protein OPG198; this interaction inhibits the repressive activity of OPG198 pseudokinase on viral replication factory formation. Mg(2+) serves as cofactor. Autophosphorylated.

It is found in the virion. It localises to the host cytoplasm. It carries out the reaction L-seryl-[protein] + ATP = O-phospho-L-seryl-[protein] + ADP + H(+). It catalyses the reaction L-threonyl-[protein] + ATP = O-phospho-L-threonyl-[protein] + ADP + H(+). Essential serine/threonine-protein kinase that plays different role in the viral life cycle. Phosphorylates the host small ribosomal protein RACK1 thereby customizing the ribosomes to a state optimal for viral mRNAs (which contain poly-A leaders) but not for host mRNAs. Facilitates viral DNA replication by inhibiting host BANF1, a cellular host defense responsive to foreign DNA. Phosphorylates host BANF1 on serine and threonine residues; this leads to BANF1 relocalization to the cytoplasm, loss of dimerization and impaired DNA binding activity. Indeed, BANF1 activity depends on its DNA-binding property which is blocked by VPK1-mediated phosphorylation. Required for viral intermediate genes expression, probably by inhibiting host BANF1. Modulates cellular responses via host JUN by two different mechanisms, either by direct phosphorylation or by modulation of upstream JIP1-MAPK complexes. Seems to participate in the accumulation/processing of late proteins and thus in virion maturation. In addition, inhibits B12 repressive activity on viral DNA replication via a phosphorylation-dependent mechanism. The chain is B1 kinase (OPG187) from Homo sapiens (Human).